The primary structure comprises 393 residues: Chorismate synthase (393 aa).

NADP(+) is bound by residues Arg40 and Arg46. Residues 129–131 (RSS), 249–250 (QA), Gly301, 316–320 (KPIPT), and Arg342 each bind FMN.

It belongs to the chorismate synthase family. Homotetramer. The cofactor is FMNH2.

The catalysed reaction is 5-O-(1-carboxyvinyl)-3-phosphoshikimate = chorismate + phosphate. It functions in the pathway metabolic intermediate biosynthesis; chorismate biosynthesis; chorismate from D-erythrose 4-phosphate and phosphoenolpyruvate: step 7/7. Catalyzes the anti-1,4-elimination of the C-3 phosphate and the C-6 proR hydrogen from 5-enolpyruvylshikimate-3-phosphate (EPSP) to yield chorismate, which is the branch point compound that serves as the starting substrate for the three terminal pathways of aromatic amino acid biosynthesis. This reaction introduces a second double bond into the aromatic ring system. The sequence is that of Chorismate synthase from Pelobacter propionicus (strain DSM 2379 / NBRC 103807 / OttBd1).